Here is a 112-residue protein sequence, read N- to C-terminus: Putative movement protein (112 aa).

A helical transmembrane segment spans residues I27–C47. Positions T77 to S112 are disordered. Residues T84–E98 show a composition bias toward basic and acidic residues. Positions N101 to S112 are enriched in polar residues.

Belongs to the nanovirus movement protein family.

It localises to the host cell membrane. May transport viral genome to neighboring plant cells directly through plasmosdesmata, without any budding. The movement protein allows efficient cell to cell propagation, by bypassing the host cell wall barrier. This is Putative movement protein (DNA-M) from Subterranean clover stunt virus (strain F) (SCSV).